Here is a 603-residue protein sequence, read N- to C-terminus: Cholinesterase (603 aa).

Residues 1–29 (MQTQHTKVTQTHFLLWILLLCMPFGKSHT) form the signal peptide. An N-linked (GlcNAc...) asparagine glycan is attached at Asn-86. Cys-94 and Cys-121 are disulfide-bonded. Asn-135 is a glycosylation site (N-linked (GlcNAc...) asparagine). 145–146 (GG) serves as a coordination point for substrate. Catalysis depends on Ser-227, which acts as the Acyl-ester intermediate. Ser-227 bears the Phosphoserine mark. Asn-270 carries an N-linked (GlcNAc...) asparagine glycan. Cysteines 281 and 292 form a disulfide. Glu-354 functions as the Charge relay system in the catalytic mechanism. Residue Asn-370 is glycosylated (N-linked (GlcNAc...) asparagine). Cys-429 and Cys-548 are disulfide-bonded. Catalysis depends on His-467, which acts as the Charge relay system. N-linked (GlcNAc...) asparagine glycans are attached at residues Asn-484, Asn-510, and Asn-515.

It belongs to the type-B carboxylesterase/lipase family. In terms of assembly, homotetramer; disulfide-linked. Dimer of dimers. Present in most cells except erythrocytes.

It is found in the secreted. The catalysed reaction is an acylcholine + H2O = a carboxylate + choline + H(+). Functionally, esterase with broad substrate specificity. Contributes to the inactivation of the neurotransmitter acetylcholine. Can degrade neurotoxic organophosphate esters. This chain is Cholinesterase (Bche), found in Mus musculus (Mouse).